The primary structure comprises 371 residues: O-antigen chain mannosyltransferase C (371 aa).

The protein belongs to the glycosyltransferase group 1 family. Glycosyltransferase 4 subfamily.

It carries out the reaction N-acetyl-alpha-D-glucosaminyl-di-trans,octa-cis-undecaprenyl diphosphate + GDP-alpha-D-mannose = alpha-D-mannosyl-(1-&gt;3)-N-acetyl-alpha-D-glucosaminyl-di-trans,octa-cis-undecaprenyl diphosphate + GDP + H(+). Its pathway is bacterial outer membrane biogenesis; LPS O-antigen biosynthesis. In terms of biological role, mannosyltransferase involved in the biosynthesis of the repeat unit of the lipopolysaccharide (LPS) O-antigen region. Catalyzes the transfer of a single alpha-(1-&gt;3)-linked mannose residue to the acceptor N-acetyl-glucosaminyl-diphospho-undecaprenol during the synthesis of the adapter region. The sequence is that of O-antigen chain mannosyltransferase C from Escherichia coli.